The sequence spans 455 residues: Dihydrolipoyllysine-residue succinyltransferase component of 2-oxoglutarate dehydrogenase complex, mitochondrial (455 aa).

The N-terminal 68 residues, 1 to 68 (MLSRSRCASR…RFFRTTAVCK (68 aa)), are a transit peptide targeting the mitochondrion. The Lipoyl-binding domain occupies 71–145 (VITVKTPAFA…EGGTPLFTLR (75 aa)). S82 bears the Phosphoserine mark. K111 is subject to N6-lipoyllysine. K155 bears the N6-acetyllysine mark. Residues 155–173 (KPAAAPAAAAPKAEPTVSA) are compositionally biased toward low complexity. The segment at 155–220 (KPAAAPAAAA…PRAEAGAGVG (66 aa)) is disordered. The segment covering 174-193 (VPPPPAAPIPTQMPPVPSPS) has biased composition (pro residues). 5 positions are modified to N6-acetyllysine: K269, K274, K275, K279, and K309. Residues H426 and D430 contribute to the active site.

Belongs to the 2-oxoacid dehydrogenase family. As to quaternary structure, the 2-oxoglutarate dehydrogenase complex is composed of OGDH (2-oxoglutarate dehydrogenase; E1), DLST (dihydrolipoamide succinyltransferase; E2), DLD (dihydrolipoamide dehydrogenase; E3) and the assembly factor KGD4. It contains multiple copies of the three enzymatic components (E1, E2 and E3). In the nucleus, the 2-oxoglutarate dehydrogenase complex associates with KAT2A. Interacts with ABHD11; this interaction maintains the functional lipoylation of the 2-oxoglutarate dehydrogenase complex. (R)-lipoate serves as cofactor.

Its subcellular location is the mitochondrion matrix. The protein resides in the nucleus. It carries out the reaction N(6)-[(R)-dihydrolipoyl]-L-lysyl-[protein] + succinyl-CoA = N(6)-[(R)-S(8)-succinyldihydrolipoyl]-L-lysyl-[protein] + CoA. Its pathway is amino-acid degradation; L-lysine degradation via saccharopine pathway; glutaryl-CoA from L-lysine: step 6/6. The protein operates within carbohydrate metabolism; tricarboxylic acid cycle. Functionally, dihydrolipoamide succinyltransferase (E2) component of the 2-oxoglutarate dehydrogenase complex. The 2-oxoglutarate dehydrogenase complex catalyzes the overall conversion of 2-oxoglutarate to succinyl-CoA and CO(2). The 2-oxoglutarate dehydrogenase complex is mainly active in the mitochondrion. A fraction of the 2-oxoglutarate dehydrogenase complex also localizes in the nucleus and is required for lysine succinylation of histones: associates with KAT2A on chromatin and provides succinyl-CoA to histone succinyltransferase KAT2A. This chain is Dihydrolipoyllysine-residue succinyltransferase component of 2-oxoglutarate dehydrogenase complex, mitochondrial, found in Bos taurus (Bovine).